Consider the following 155-residue polypeptide: Transcriptional repressor NrdR (155 aa).

A zinc finger lies at 3–34 (CPFCQHDDTQVLDTRVSEEGDSIRRRRRCTSC). The 91-residue stretch at 49 to 139 (PVVVKKNGSR…VYKSFEDVAE (91 aa)) folds into the ATP-cone domain.

The protein belongs to the NrdR family. Requires Zn(2+) as cofactor.

In terms of biological role, negatively regulates transcription of bacterial ribonucleotide reductase nrd genes and operons by binding to NrdR-boxes. This Janthinobacterium sp. (strain Marseille) (Minibacterium massiliensis) protein is Transcriptional repressor NrdR.